A 330-amino-acid chain; its full sequence is Cobalamin biosynthesis protein CobD (330 aa).

Helical transmembrane passes span 60 to 80 (TLVI…PPIV), 153 to 173 (GIIA…LLGV), 227 to 247 (LGIV…WKIF), and 308 to 328 (IVLF…FVLT).

It belongs to the CobD/CbiB family.

It localises to the cell membrane. It participates in cofactor biosynthesis; adenosylcobalamin biosynthesis. Its function is as follows. Converts cobyric acid to cobinamide by the addition of aminopropanol on the F carboxylic group. This Desulfotalea psychrophila (strain LSv54 / DSM 12343) protein is Cobalamin biosynthesis protein CobD.